A 559-amino-acid polypeptide reads, in one-letter code: Prolyl 4-hydroxylase subunit alpha-1 (559 aa).

A signal peptide spans 1 to 16; the sequence is MRLALLVLATIGYAVA. Asn158 carries an N-linked (GlcNAc...) asparagine glycan. The 109-residue stretch at 404–512 folds into the Fe2OG dioxygenase domain; sequence TAEELQIANY…KWVSNKWIHE (109 aa). 3 residues coordinate Fe cation: His422, Asp424, and His493. Lys503 contributes to the 2-oxoglutarate binding site.

This sequence belongs to the P4HA family. As to quaternary structure, heterotetramer of two alpha chains and two beta chains. Exists either as a phy-1(2)/pdi-2(2) tetramer or as a phy-1/phy-2/pdi-2(2) tetramer. Fe(2+) serves as cofactor. L-ascorbate is required as a cofactor.

The protein resides in the endoplasmic reticulum lumen. The enzyme catalyses L-prolyl-[collagen] + 2-oxoglutarate + O2 = trans-4-hydroxy-L-prolyl-[collagen] + succinate + CO2. Catalyzes the post-translational formation of 4-hydroxyproline in -Xaa-Pro-Gly- sequences in collagens and other proteins. This is Prolyl 4-hydroxylase subunit alpha-1 (dpy-18) from Caenorhabditis elegans.